Here is a 419-residue protein sequence, read N- to C-terminus: MDKLKIEASEALAGNVVISGAKNAALPILMAGVLAETDFVVTNVPNLRDVNTSCELLRCLGAEVTRSDNSEVRISTSSLDHFCAPYDLVKTMRASILILGPLLARFGTADVSLPGGCAIGARPVNLHLHGLEQMGAKIEVEEGYIKARVDGRLKGAHIFMDMVSVGATENLLMAATLADGETIIENAAREPEVIDLANCLIAMGAKIEGAGTDSIRIQGVESLNGCHYRVMPDRIETGSFLIAAAVTRGKIRCVDADPSTLEAVLAKLEDAGATITTGSDWIELDMQGKRPKAVNIKTVPYPGFPTDMQAQFCLLNVLAEGTSTITETIFENRFMHVPELIRMGANMELEGNTCIIQGIERLNGAQVMATDLRASASLVIAGLVAEGTTIVDRIYHLDRGYEHIEDKFKGLGGQVVRVS.

Position 22 to 23 (K22 to N23) interacts with phosphoenolpyruvate. R93 contributes to the UDP-N-acetyl-alpha-D-glucosamine binding site. Residue C117 is the Proton donor of the active site. Position 117 is a 2-(S-cysteinyl)pyruvic acid O-phosphothioketal (C117). Positions 307 and 329 each coordinate UDP-N-acetyl-alpha-D-glucosamine.

This sequence belongs to the EPSP synthase family. MurA subfamily.

It is found in the cytoplasm. The enzyme catalyses phosphoenolpyruvate + UDP-N-acetyl-alpha-D-glucosamine = UDP-N-acetyl-3-O-(1-carboxyvinyl)-alpha-D-glucosamine + phosphate. It participates in cell wall biogenesis; peptidoglycan biosynthesis. Functionally, cell wall formation. Adds enolpyruvyl to UDP-N-acetylglucosamine. The sequence is that of UDP-N-acetylglucosamine 1-carboxyvinyltransferase from Shewanella woodyi (strain ATCC 51908 / MS32).